The primary structure comprises 253 residues: Ribosome maturation factor RimP (253 aa).

Over residues 186–199 (RRGKAAEREKKRDL) the composition is skewed to basic and acidic residues. The segment at 186–253 (RRGKAAEREK…RARRGEIDPD (68 aa)) is disordered. Low complexity predominate over residues 201–216 (LAPPLAPHAKPAAQAK). Basic and acidic residues predominate over residues 240 to 253 (LAADRARRGEIDPD).

Belongs to the RimP family.

The protein resides in the cytoplasm. Functionally, required for maturation of 30S ribosomal subunits. The sequence is that of Ribosome maturation factor RimP from Bradyrhizobium sp. (strain BTAi1 / ATCC BAA-1182).